The sequence spans 95 residues: Aspartyl/glutamyl-tRNA(Asn/Gln) amidotransferase subunit C (95 aa).

It belongs to the GatC family. Heterotrimer of A, B and C subunits.

The catalysed reaction is L-glutamyl-tRNA(Gln) + L-glutamine + ATP + H2O = L-glutaminyl-tRNA(Gln) + L-glutamate + ADP + phosphate + H(+). It carries out the reaction L-aspartyl-tRNA(Asn) + L-glutamine + ATP + H2O = L-asparaginyl-tRNA(Asn) + L-glutamate + ADP + phosphate + 2 H(+). Its function is as follows. Allows the formation of correctly charged Asn-tRNA(Asn) or Gln-tRNA(Gln) through the transamidation of misacylated Asp-tRNA(Asn) or Glu-tRNA(Gln) in organisms which lack either or both of asparaginyl-tRNA or glutaminyl-tRNA synthetases. The reaction takes place in the presence of glutamine and ATP through an activated phospho-Asp-tRNA(Asn) or phospho-Glu-tRNA(Gln). This Ectopseudomonas mendocina (strain ymp) (Pseudomonas mendocina) protein is Aspartyl/glutamyl-tRNA(Asn/Gln) amidotransferase subunit C.